The sequence spans 157 residues: Eukaryotic translation initiation factor 5A-1 (157 aa).

At S2 the chain carries N-acetylserine. S2 bears the Phosphoserine mark. T7 and T10 each carry phosphothreonine. Residue K51 is modified to Hypusine. S74 bears the Phosphoserine mark. Residue K86 forms a Glycyl lysine isopeptide (Lys-Gly) (interchain with G-Cter in ubiquitin) linkage.

Belongs to the eIF-5A family. Homodimer. Binds to 80S ribosomes. Actively translating ribosomes show mutually exclusive binding of eIF5a (HYP2 or ANB1) and EFT1/eEF2. Interacts with DYS1 and LIA1. In terms of processing, lys-51 undergoes hypusination, a unique post-translational modification that consists in the addition of a butylamino group from spermidine to lysine side chain, leading to the formation of the unusual amino acid hypusine. eIF-5As are the only known proteins to undergo this modification, which is essential for their function.

The protein localises to the cytoplasm. In terms of biological role, translation factor that promotes translation elongation and termination, particularly upon ribosome stalling at specific amino acid sequence contexts. Binds between the exit (E) and peptidyl (P) site of the ribosome and promotes rescue of stalled ribosome: specifically required for efficient translation of polyproline-containing peptides as well as other motifs that stall the ribosome. Acts as a ribosome quality control (RQC) cofactor by joining the RQC complex to facilitate peptidyl transfer during CAT tailing step. Involved in actin dynamics and cell cycle progression, mRNA decay and probably in a pathway involved in stress response and maintenance of cell wall integrity. The protein is Eukaryotic translation initiation factor 5A-1 (HYP2) of Saccharomyces cerevisiae (strain ATCC 204508 / S288c) (Baker's yeast).